Reading from the N-terminus, the 1104-residue chain is Valine--tRNA ligase, mitochondrial (1104 aa).

The N-terminal 47 residues, 1–47 (MNKWLNTLSKTFTFRLLNCHYRRSLPLCQNFSLKKSLTHNQVRFFKM), are a transit peptide targeting the mitochondrion. Ser73 carries the phosphoserine modification. The interval 99–119 (KKNAAATTGASQKKPKKKKEV) is disordered. The 'HIGH' region signature appears at 190 to 200 (PNVTGALHIGH). Phosphoserine occurs at positions 294 and 332. Positions 703 to 707 (KMSKS) match the 'KMSKS' region motif. Residue Lys706 coordinates ATP. Ser707 carries the phosphoserine modification. Thr1003 is modified (phosphothreonine).

It belongs to the class-I aminoacyl-tRNA synthetase family.

Its subcellular location is the cytoplasm. The protein localises to the mitochondrion. It carries out the reaction tRNA(Val) + L-valine + ATP = L-valyl-tRNA(Val) + AMP + diphosphate. The protein is Valine--tRNA ligase, mitochondrial (VAS1) of Saccharomyces cerevisiae (strain ATCC 204508 / S288c) (Baker's yeast).